The sequence spans 239 residues: Uridylate kinase (239 aa).

10–13 (KFSG) provides a ligand contact to ATP. The tract at residues 18-23 (GENGFG) is involved in allosteric activation by GTP. Residue glycine 52 coordinates UMP. Residues glycine 53 and arginine 57 each contribute to the ATP site. Residues aspartate 73 and 134 to 141 (TGNPYFTT) each bind UMP. 3 residues coordinate ATP: threonine 161, tyrosine 167, and aspartate 170.

The protein belongs to the UMP kinase family. Homohexamer.

It localises to the cytoplasm. The enzyme catalyses UMP + ATP = UDP + ADP. Its pathway is pyrimidine metabolism; CTP biosynthesis via de novo pathway; UDP from UMP (UMPK route): step 1/1. Its activity is regulated as follows. Allosterically activated by GTP. Inhibited by UTP. In terms of biological role, catalyzes the reversible phosphorylation of UMP to UDP. The polypeptide is Uridylate kinase (Campylobacter jejuni subsp. jejuni serotype O:2 (strain ATCC 700819 / NCTC 11168)).